Consider the following 608-residue polypeptide: Pentatricopeptide repeat-containing protein At5g40410, mitochondrial (608 aa).

The transit peptide at 1 to 28 (MIKANVYSCSKFRFLYRRRFLSQSSFVH) directs the protein to the mitochondrion. PPR repeat units lie at residues 30–64 (LDAN…VSYR), 65–95 (HGFI…MPER), 96–130 (DLVS…EVGF), 133–167 (NEVT…GVLE), 168–198 (EVKV…LSIK), 199–233 (NLVS…GHEP), 234–268 (DQAT…GFSG), 269–299 (NKCI…ITSP), 300–334 (DSMA…GISP), 335–365 (DHVT…MSKR), and 371–401 (RLDH…MPME). The interval 406–481 (VWGALLGACR…ASGCSYIEHG (76 aa)) is type E motif. Residues 482–512 (NKIHKFVVGDWSHPESEKIQKKLKEIRKKMK) are type E(+) motif. The tract at residues 514–608 (EMGYKSKTEF…DGSCSCSDYW (95 aa)) is type DYW motif.

Belongs to the PPR family. PCMP-H subfamily.

The protein localises to the mitochondrion. In Arabidopsis thaliana (Mouse-ear cress), this protein is Pentatricopeptide repeat-containing protein At5g40410, mitochondrial (PCMP-H15).